The following is a 297-amino-acid chain: Zinc finger protein 784 (297 aa).

A compositionally biased stretch (pro residues) spans 1–12; it reads MAAARPDPPIPS. The interval 1–39 is disordered; sequence MAAARPDPPIPSSPTRESPSPEPPDLVLVPDGRPVTPPG. The residue at position 13 (Ser-13) is a Phosphoserine. 3 C2H2-type zinc fingers span residues 64–86, 100–122, and 128–150; these read FHCA…EHGH, SRCH…YSLH, and YRCS…QHRH. The tract at residues 149 to 175 is disordered; it reads RHGVEPGTSERLLPTTTTGQPNSRVAQ. Residues 162–173 are compositionally biased toward polar residues; the sequence is PTTTTGQPNSRV. 3 C2H2-type zinc fingers span residues 195–217, 223–245, and 251–273; these read FACR…ERVH, YHCS…ARIH, and FRCM…QRTH. The tract at residues 268–297 is disordered; it reads KHQRTHFHGPGSGVGESRGQLRSSSVSQES. Over residues 287–297 the composition is skewed to polar residues; the sequence is QLRSSSVSQES.

This sequence belongs to the krueppel C2H2-type zinc-finger protein family.

Its subcellular location is the nucleus. Its function is as follows. May be involved in transcriptional regulation. The sequence is that of Zinc finger protein 784 (Znf784) from Mus musculus (Mouse).